We begin with the raw amino-acid sequence, 181 residues long: Inorganic pyrophosphatase (181 aa).

Residues Lys16, Arg30, and Tyr42 each coordinate substrate. Mg(2+)-binding residues include Asp52, Asp57, and Asp89. A substrate-binding site is contributed by Tyr126.

The protein belongs to the PPase family. As to quaternary structure, homohexamer. Mg(2+) is required as a cofactor.

It is found in the cytoplasm. The catalysed reaction is diphosphate + H2O = 2 phosphate + H(+). Catalyzes the hydrolysis of inorganic pyrophosphate (PPi) forming two phosphate ions. The polypeptide is Inorganic pyrophosphatase (Malacoplasma penetrans (strain HF-2) (Mycoplasma penetrans)).